The sequence spans 463 residues: Mitochondrial dynamics protein MIEF1 (463 aa).

Residues 1–23 (MAGAGERKGKKDDNGIGTAIDFV) are Mitochondrial intermembrane-facing. Residues 24-46 (LSNARLVLGVGGAAMLGIATLAV) traverse the membrane as a helical segment. Over 47–463 (KRMYDRAISA…LSEPEVLLQT (417 aa)) the chain is Cytoplasmic. Residues 49–195 (MYDRAISAPT…LSGSLYDDLQ (147 aa)) are dimerization. Residues S55, S59, S79, and S94 each carry the phosphoserine modification. The interval 57 to 77 (PTSPTRLSHSGKRSWEEPNWM) is disordered. A disordered region spans residues 96-123 (QTLPTDSSTFDTDTFCPPRPKPVARKGQ). The span at 100 to 110 (TDSSTFDTDTF) shows a compositional bias: low complexity. The interval 160–169 (AAVDICAELR) is important for interaction with DNM1L. 3 residues coordinate ADP: S187, S189, and H201. The important for interaction with DNM1L stretch occupies residues 234 to 242 (RRENPEYFP). The ADP site is built by S340, R342, and K368.

The protein belongs to the SMCR7 family. Homodimer. Interacts with DNM1L. In terms of tissue distribution, expression is relatively high in heart, skeletal muscle, pancreas and kidney.

The protein localises to the mitochondrion outer membrane. In terms of biological role, mitochondrial outer membrane protein which regulates mitochondrial fission/fusion dynamics. Promotes the recruitment and association of the fission mediator dynamin-related protein 1 (DNM1L) to the mitochondrial surface independently of the mitochondrial fission FIS1 and MFF proteins. Regulates DNM1L GTPase activity and DNM1L oligomerization. Binds ADP and can also bind GDP, although with lower affinity. Does not bind CDP, UDP, ATP, AMP or GTP. Inhibits DNM1L GTPase activity in the absence of bound ADP. Requires ADP to stimulate DNM1L GTPase activity and the assembly of DNM1L into long, oligomeric tubules with a spiral pattern, as opposed to the ring-like DNM1L oligomers observed in the absence of bound ADP. Does not require ADP for its function in recruiting DNM1L. This Homo sapiens (Human) protein is Mitochondrial dynamics protein MIEF1.